The following is a 226-amino-acid chain: Protein transport protein sec20 (226 aa).

Residues 1–189 are Cytoplasmic-facing; the sequence is MADVLNALEE…IKSLKLSDRS (189 aa). Residues 53 to 75 adopt a coiled-coil conformation; the sequence is LRYEKAVQEYIRLNRRYRNKIAS. Ser-97 carries the post-translational modification Phosphoserine. Residues 190 to 210 form a helical; Anchor for type IV membrane protein membrane-spanning segment; that stretch reads DYFLVVSGFGFFIFVVVYLLF. Over 211-226 the chain is Lumenal; sequence KRIVWPILSMFLWFLR.

Belongs to the SEC20 family. As to quaternary structure, component of a SNARE complex consisting of ufe1, sec20, sec22 and use1. Interacts with tip20 through its cytoplasmic domain.

The protein localises to the endoplasmic reticulum membrane. Its function is as follows. SNARE required for targeting and fusion of Golgi-derived retrograde transport vesicles with the ER. The polypeptide is Protein transport protein sec20 (Schizosaccharomyces pombe (strain 972 / ATCC 24843) (Fission yeast)).